The primary structure comprises 456 residues: Elongator complex protein 4 (456 aa).

Basic and acidic residues predominate over residues 1–11 (MSFRKRGEILN). Positions 1–91 (MSFRKRGEIL…SQPTTSTGSA (91 aa)) are disordered. Arg13 is modified (omega-N-methylarginine). The span at 18 to 27 (RGPLLRGPPR) shows a compositional bias: low complexity. Over residues 57–66 (NIADESKTKM) the composition is skewed to basic and acidic residues. A compositionally biased stretch (low complexity) spans 77 to 90 (PSPATSQPTTSTGS). At Ser222 the chain carries Phosphoserine. A disordered region spans residues 424–444 (EGSAASEQSHSHSHSDEISHN). Over residues 432–442 (SHSHSHSDEIS) the composition is skewed to basic and acidic residues.

This sequence belongs to the ELP4 family. In terms of assembly, component of the elongator complex which consists of ELP1/IKI3, ELP2, ELP3, ELP4, ELP5/IKI1 and ELP6. The elongator complex is composed of two copies of the Elp123 subcomplex (composed of ELP1/IKI3, ELP2 and ELP3) and two copies of the Elp456 subcomplex (composed of ELP4, ELP5/IKI1 and ELP6). The Elp123 subcomplex forms a two-lobed scaffold, which binds the Elp456 subcomplex asymmetrically. In each lobe, ELP2 is tightly sandwiched between ELP1/IKI3 and ELP3. The Elp123 subcomplex binds tRNA through ELP1/IKI3 and ELP3 and can bind 2 tRNAs simultaneously. tRNA-binding by the Elp123 subcomplex induces conformational rearrangements which precisely position the targeted anticodon base in the active site. The Elp456 subcomplex binds tRNA and has ATPase activity. ELP4 interacts with KTI12.

It is found in the cytoplasm. The protein resides in the nucleus. It functions in the pathway tRNA modification; 5-methoxycarbonylmethyl-2-thiouridine-tRNA biosynthesis. Its function is as follows. Component of the elongator complex, a multiprotein complex which is required for multiple tRNA modifications, including mcm5U (5-methoxycarbonylmethyl uridine), mcm5s2U (5-methoxycarbonylmethyl-2-thiouridine), and ncm5U (5-carbamoylmethyl uridine). The elongator complex catalyzes formation of carboxymethyluridine in the wobble base at position 34 in tRNAs. It functions as a gamma-toxin target (TOT); disruption of the complex confers resistance to Kluyveromyces lactis toxin zymocin (pGKL1 killer toxin). May also be involved in sensitivity to Pichia inositovora toxin. The polypeptide is Elongator complex protein 4 (Saccharomyces cerevisiae (strain ATCC 204508 / S288c) (Baker's yeast)).